We begin with the raw amino-acid sequence, 341 residues long: Protein pelota homolog (341 aa).

The protein belongs to the eukaryotic release factor 1 family. Pelota subfamily. Monomer. It depends on a divalent metal cation as a cofactor.

The protein resides in the cytoplasm. Functionally, may function in recognizing stalled ribosomes, interact with stem-loop structures in stalled mRNA molecules, and effect endonucleolytic cleavage of the mRNA. May play a role in the release non-functional ribosomes and degradation of damaged mRNAs. Has endoribonuclease activity. In Methanoculleus marisnigri (strain ATCC 35101 / DSM 1498 / JR1), this protein is Protein pelota homolog.